Here is a 130-residue protein sequence, read N- to C-terminus: Small ribosomal subunit protein uS11 (130 aa).

This sequence belongs to the universal ribosomal protein uS11 family. Part of the 30S ribosomal subunit. Interacts with proteins S7 and S18. Binds to IF-3.

Functionally, located on the platform of the 30S subunit, it bridges several disparate RNA helices of the 16S rRNA. Forms part of the Shine-Dalgarno cleft in the 70S ribosome. The sequence is that of Small ribosomal subunit protein uS11 from Tropheryma whipplei (strain TW08/27) (Whipple's bacillus).